Consider the following 285-residue polypeptide: Ribonuclease H1 (285 aa).

The disordered stretch occupies residues 72 to 126 (RSSSSPDGSKGQESAHEQKSQAKTSKRPREPLGEGEELPEPGPKHTRQDTEPAAV). Residues 135–281 (MGESVIVYTD…ADRLAREGAK (147 aa)) enclose the RNase H type-1 domain. Mg(2+) contacts are provided by Asp144, Glu185, Asp209, and Asp273.

It belongs to the RNase H family. Monomer. Requires Mg(2+) as cofactor.

It is found in the cytoplasm. The catalysed reaction is Endonucleolytic cleavage to 5'-phosphomonoester.. In the presence of magnesium, manganese is inhibitory. Its function is as follows. Endonuclease that specifically degrades the RNA of RNA-DNA hybrids. Plays a role in RNA polymerase II (RNAp II) transcription termination by degrading R-loop RNA-DNA hybrid formation at G-rich pause sites located downstream of the poly(A) site and behind the elongating RNAp II. This is Ribonuclease H1 (Rnaseh1) from Mus musculus (Mouse).